The sequence spans 312 residues: Homoserine kinase (312 aa).

Position 91 to 101 (91 to 101) interacts with ATP; the sequence is PVASGLGSSAC.

The protein belongs to the GHMP kinase family. Homoserine kinase subfamily.

It localises to the cytoplasm. The enzyme catalyses L-homoserine + ATP = O-phospho-L-homoserine + ADP + H(+). It functions in the pathway amino-acid biosynthesis; L-threonine biosynthesis; L-threonine from L-aspartate: step 4/5. Functionally, catalyzes the ATP-dependent phosphorylation of L-homoserine to L-homoserine phosphate. This chain is Homoserine kinase, found in Blochmanniella pennsylvanica (strain BPEN).